Reading from the N-terminus, the 368-residue chain is 7,8-didemethyl-8-hydroxy-5-deazariboflavin synthase (368 aa).

Residues 36 to 272 (LSYCRNVFLP…EEVSVQVPPN (237 aa)) enclose the Radical SAM core domain. [4Fe-4S] cluster is bound by residues Cys-50, Cys-54, and Cys-57.

Belongs to the radical SAM superfamily. CofG family. As to quaternary structure, consists of two subunits, CofG and CofH. The cofactor is [4Fe-4S] cluster.

It carries out the reaction 5-amino-5-(4-hydroxybenzyl)-6-(D-ribitylimino)-5,6-dihydrouracil + S-adenosyl-L-methionine = 7,8-didemethyl-8-hydroxy-5-deazariboflavin + 5'-deoxyadenosine + L-methionine + NH4(+) + H(+). Its pathway is cofactor biosynthesis; coenzyme F0 biosynthesis. In terms of biological role, catalyzes the radical-mediated synthesis of 7,8-didemethyl-8-hydroxy-5-deazariboflavin from 5-amino-5-(4-hydroxybenzyl)-6-(D-ribitylimino)-5,6-dihydrouracil. In Haloarcula marismortui (strain ATCC 43049 / DSM 3752 / JCM 8966 / VKM B-1809) (Halobacterium marismortui), this protein is 7,8-didemethyl-8-hydroxy-5-deazariboflavin synthase.